A 319-amino-acid polypeptide reads, in one-letter code: Aspartate carbamoyltransferase catalytic subunit (319 aa).

Carbamoyl phosphate-binding residues include Arg-54 and Thr-55. Lys-82 lines the L-aspartate pocket. Carbamoyl phosphate contacts are provided by Arg-104, His-134, and Gln-137. 2 residues coordinate L-aspartate: Arg-171 and Arg-227. 2 residues coordinate carbamoyl phosphate: Gly-271 and Pro-272.

This sequence belongs to the aspartate/ornithine carbamoyltransferase superfamily. ATCase family. Heterododecamer (2C3:3R2) of six catalytic PyrB chains organized as two trimers (C3), and six regulatory PyrI chains organized as three dimers (R2).

It carries out the reaction carbamoyl phosphate + L-aspartate = N-carbamoyl-L-aspartate + phosphate + H(+). Its pathway is pyrimidine metabolism; UMP biosynthesis via de novo pathway; (S)-dihydroorotate from bicarbonate: step 2/3. Functionally, catalyzes the condensation of carbamoyl phosphate and aspartate to form carbamoyl aspartate and inorganic phosphate, the committed step in the de novo pyrimidine nucleotide biosynthesis pathway. The protein is Aspartate carbamoyltransferase catalytic subunit of Kineococcus radiotolerans (strain ATCC BAA-149 / DSM 14245 / SRS30216).